We begin with the raw amino-acid sequence, 193 residues long: Holliday junction branch migration complex subunit RuvA (193 aa).

The interval M1–A63 is domain I. A domain II region spans residues E64 to I142. Residues S143–S145 form a flexible linker region. The interval S145–L193 is domain III.

It belongs to the RuvA family. Homotetramer. Forms an RuvA(8)-RuvB(12)-Holliday junction (HJ) complex. HJ DNA is sandwiched between 2 RuvA tetramers; dsDNA enters through RuvA and exits via RuvB. An RuvB hexamer assembles on each DNA strand where it exits the tetramer. Each RuvB hexamer is contacted by two RuvA subunits (via domain III) on 2 adjacent RuvB subunits; this complex drives branch migration. In the full resolvosome a probable DNA-RuvA(4)-RuvB(12)-RuvC(2) complex forms which resolves the HJ.

The protein resides in the cytoplasm. In terms of biological role, the RuvA-RuvB-RuvC complex processes Holliday junction (HJ) DNA during genetic recombination and DNA repair, while the RuvA-RuvB complex plays an important role in the rescue of blocked DNA replication forks via replication fork reversal (RFR). RuvA specifically binds to HJ cruciform DNA, conferring on it an open structure. The RuvB hexamer acts as an ATP-dependent pump, pulling dsDNA into and through the RuvAB complex. HJ branch migration allows RuvC to scan DNA until it finds its consensus sequence, where it cleaves and resolves the cruciform DNA. The chain is Holliday junction branch migration complex subunit RuvA from Flavobacterium psychrophilum (strain ATCC 49511 / DSM 21280 / CIP 103535 / JIP02/86).